The primary structure comprises 240 residues: Myomodulin neuropeptides 2 (240 aa).

The N-terminal stretch at 1 to 23 is a signal peptide; the sequence is MWKILETCSCFLVVAVLSGLGKA. Residues 23-44 form a disordered region; the sequence is AQPESFSGSAVTDDSTSGANKR. The propeptide occupies 24-44; it reads QPESFSGSAVTDDSTSGANKR. The segment covering 26-41 has biased composition (polar residues); the sequence is ESFSGSAVTDDSTSGA. A leucine amide mark is found at leucine 51 and leucine 60. 2 propeptides (connecting peptide) span residues 72–81 and 84–112; these read SGHQVPMLRA and GSPD…RDQS. Residue alanine 81 is modified to Alanine amide. Position 115 is a pyrrolidone carboxylic acid (glutamine 115). Tyrosine 121 carries the tyrosine amide modification. Propeptides (connecting peptide) lie at residues 124 to 147, 124 to 148, 124 to 149, 124 to 168, 131 to 168, 149 to 168, 150 to 168, 151 to 168, 171 to 190, and 171 to 199; these read DNNG…SNFD, DNNG…NFDL, DNNG…FDLL, DNNG…GGRY, DLLD…GGRY, LSSL…GGRY, SSLN…GGRY, SLNN…GGRY, SLPD…LVQS, and SLPD…PYSS. Isoleucine 207 is modified (isoleucine amide). The propeptide occupies 210-219; the sequence is FSGSPRLQAK. The interval 212–240 is disordered; it reads GSPRLQAKAVPRPRIGRQESQMREAKSAE. Isoleucine 226 carries the isoleucine amide modification. Residues 227–240 constitute a propeptide that is removed on maturation; sequence GRQESQMREAKSAE. The span at 227 to 240 shows a compositional bias: basic and acidic residues; that stretch reads GRQESQMREAKSAE.

Expressed in the pedal-buccal projection neurons in the pedal ganglion.

The protein localises to the secreted. MMG2-DPs (Myomodulin gene 2-derived peptides) bias egestive feeding programs toward ingestive ones, and modulate accessory radula closer (ARC) muscle contractions. This is Myomodulin neuropeptides 2 (MMG2) from Aplysia californica (California sea hare).